The chain runs to 101 residues: Chaperone modulatory protein CbpM (101 aa).

The protein belongs to the CbpM family.

Interacts with CbpA and inhibits both the DnaJ-like co-chaperone activity and the DNA binding activity of CbpA. Together with CbpA, modulates the activity of the DnaK chaperone system. Does not inhibit the co-chaperone activity of DnaJ. The sequence is that of Chaperone modulatory protein CbpM from Salmonella paratyphi A (strain ATCC 9150 / SARB42).